Consider the following 206-residue polypeptide: Ribosomal RNA small subunit methyltransferase G (206 aa).

S-adenosyl-L-methionine-binding positions include Gly-73, Leu-78, 124-125 (VE), and Arg-139.

Belongs to the methyltransferase superfamily. RNA methyltransferase RsmG family.

It localises to the cytoplasm. The enzyme catalyses guanosine(527) in 16S rRNA + S-adenosyl-L-methionine = N(7)-methylguanosine(527) in 16S rRNA + S-adenosyl-L-homocysteine. Specifically methylates the N7 position of guanine in position 527 of 16S rRNA. This is Ribosomal RNA small subunit methyltransferase G from Yersinia enterocolitica serotype O:8 / biotype 1B (strain NCTC 13174 / 8081).